The primary structure comprises 115 residues: Large ribosomal subunit protein uL18 (115 aa).

The protein belongs to the universal ribosomal protein uL18 family. As to quaternary structure, part of the 50S ribosomal subunit; part of the 5S rRNA/L5/L18/L25 subcomplex. Contacts the 5S and 23S rRNAs.

Functionally, this is one of the proteins that bind and probably mediate the attachment of the 5S RNA into the large ribosomal subunit, where it forms part of the central protuberance. This Rickettsia rickettsii (strain Iowa) protein is Large ribosomal subunit protein uL18.